A 184-amino-acid chain; its full sequence is Ribosome-recycling factor (184 aa).

It belongs to the RRF family.

It localises to the cytoplasm. Responsible for the release of ribosomes from messenger RNA at the termination of protein biosynthesis. May increase the efficiency of translation by recycling ribosomes from one round of translation to another. The polypeptide is Ribosome-recycling factor (Borrelia hermsii (strain HS1 / DAH)).